A 167-amino-acid polypeptide reads, in one-letter code: Troponin C-akin-1 protein (167 aa).

Residue 17–20 coordinates substrate; it reads YGAL. The active-site Proton acceptor is Glu-92.

It belongs to the gamma-glutamylcyclotransferase family. In embryos, expression is seen in heart cells of the dorsal vessel and hindgut visceral mesoderm.

In terms of biological role, putative gamma-glutamylcyclotransferase. The protein is Troponin C-akin-1 protein (Tina-1) of Drosophila melanogaster (Fruit fly).